The primary structure comprises 391 residues: G-patch domain-containing protein 1 (391 aa).

Residues 15–61 (KDSAAFKLMKSMGWEEGEGLGKDKQGIKGYVRVTNKQDTSGVGLDKP) enclose the G-patch domain. 2 disordered regions span residues 80–132 (VQAA…EKGK) and 212–307 (KASE…PAKR). Composition is skewed to acidic residues over residues 92–102 (DDSDKEDESED) and 265–295 (NSDDDDDDDDDDDEEDEEEDEDESEADDDDK). Residues 305–312 (AKRKHDEI) carry the Nuclear localization signal motif.

As to expression, strongly expressed in tissues with high cell proliferation activity that have a high demand for ribosome production such as shoot tips, leaves primordia, root tips and floral buds.

It is found in the nucleus. The protein resides in the nucleolus. Involved in ribosome biogenesis, required for normal progression of rRNA processing. Seems to promote cell proliferation in leaves. This chain is G-patch domain-containing protein 1, found in Arabidopsis thaliana (Mouse-ear cress).